A 540-amino-acid polypeptide reads, in one-letter code: Phosphoenolpyruvate carboxykinase (ATP) (540 aa).

Residues Arg67, Tyr207, and Lys213 each contribute to the substrate site. ATP-binding positions include Lys213, His232, and 248 to 256 (GLSGTGKTT). Mn(2+) contacts are provided by Lys213 and His232. Asp269 serves as a coordination point for Mn(2+). ATP contacts are provided by residues Glu297, Arg333, 449 to 450 (RI), and Thr455. Arg333 is a binding site for substrate.

The protein belongs to the phosphoenolpyruvate carboxykinase (ATP) family. As to quaternary structure, monomer. Mn(2+) serves as cofactor.

The protein localises to the cytoplasm. The catalysed reaction is oxaloacetate + ATP = phosphoenolpyruvate + ADP + CO2. The protein operates within carbohydrate biosynthesis; gluconeogenesis. Involved in the gluconeogenesis. Catalyzes the conversion of oxaloacetate (OAA) to phosphoenolpyruvate (PEP) through direct phosphoryl transfer between the nucleoside triphosphate and OAA. The polypeptide is Phosphoenolpyruvate carboxykinase (ATP) (Aliivibrio fischeri (strain MJ11) (Vibrio fischeri)).